Here is a 266-residue protein sequence, read N- to C-terminus: Glucosamine-6-phosphate deaminase (266 aa).

Catalysis depends on aspartate 72, which acts as the Proton acceptor; for enolization step. Residue aspartate 141 is the For ring-opening step of the active site. Histidine 143 acts as the Proton acceptor; for ring-opening step in catalysis. The active-site For ring-opening step is glutamate 148.

The protein belongs to the glucosamine/galactosamine-6-phosphate isomerase family. NagB subfamily. In terms of assembly, homohexamer.

The catalysed reaction is alpha-D-glucosamine 6-phosphate + H2O = beta-D-fructose 6-phosphate + NH4(+). The protein operates within amino-sugar metabolism; N-acetylneuraminate degradation; D-fructose 6-phosphate from N-acetylneuraminate: step 5/5. Allosterically activated by N-acetylglucosamine 6-phosphate (GlcNAc6P). Functionally, catalyzes the reversible isomerization-deamination of glucosamine 6-phosphate (GlcN6P) to form fructose 6-phosphate (Fru6P) and ammonium ion. The chain is Glucosamine-6-phosphate deaminase from Erwinia tasmaniensis (strain DSM 17950 / CFBP 7177 / CIP 109463 / NCPPB 4357 / Et1/99).